The primary structure comprises 1031 residues: Error-prone DNA polymerase (1031 aa).

This sequence belongs to the DNA polymerase type-C family. DnaE2 subfamily.

The protein resides in the cytoplasm. The catalysed reaction is DNA(n) + a 2'-deoxyribonucleoside 5'-triphosphate = DNA(n+1) + diphosphate. In terms of biological role, DNA polymerase involved in damage-induced mutagenesis and translesion synthesis (TLS). It is not the major replicative DNA polymerase. This is Error-prone DNA polymerase from Pseudomonas savastanoi pv. phaseolicola (strain 1448A / Race 6) (Pseudomonas syringae pv. phaseolicola (strain 1448A / Race 6)).